A 533-amino-acid chain; its full sequence is Glucose-6-phosphate isomerase (533 aa).

The active-site Proton donor is E341. Catalysis depends on residues H372 and K501.

It belongs to the GPI family.

The protein localises to the cytoplasm. The catalysed reaction is alpha-D-glucose 6-phosphate = beta-D-fructose 6-phosphate. The protein operates within carbohydrate biosynthesis; gluconeogenesis. It participates in carbohydrate degradation; glycolysis; D-glyceraldehyde 3-phosphate and glycerone phosphate from D-glucose: step 2/4. Its function is as follows. Catalyzes the reversible isomerization of glucose-6-phosphate to fructose-6-phosphate. This Cereibacter sphaeroides (strain ATCC 17023 / DSM 158 / JCM 6121 / CCUG 31486 / LMG 2827 / NBRC 12203 / NCIMB 8253 / ATH 2.4.1.) (Rhodobacter sphaeroides) protein is Glucose-6-phosphate isomerase.